Reading from the N-terminus, the 503-residue chain is MDFSIKGCDWSKGTANGFLTGKSDCIVLGVFEAQTLSGAALDIDEATKGLVSRVIKAGDIDGKLGKTLFLHEVSGIGASRVLLVGLGRQDAFSQKAYGDAAKAAWRALLGTKVVQVTFTLAQLPVPERASDWGVRAAILALRNETYKFTQMKSKPDAGAPALKRVVFSVDPADDKAAKVAAKQAVALANGMDLTRDLGNLPGNVCTPTYLANTAKKIAKDWGLKVDVLGLKQIQALKMGSFLSVAKGSVEPPQFIVLQYRGAAAKAAPVVLVGKGITFDSGGISLKPGEGMDEMKYDMCGAGSVLGTMRAVAEMGLKINVVAIVPTCENMPAGNANKPGDIVTSMKGLTIEVLNTDAEGRLILCDALTYAERFKPAAVIDVATLTGACIIALGHHNTGLFSKDDALAGELLDASREAGDPAWRLPLDDEYQDQLKSNFADLANIGGRPAGSVTAACFLSRFAENYPWAHLDIAGTAWKSGAAKGATGRPVPLLAQFLIDRAGA.

Mn(2+) contacts are provided by Lys-274 and Asp-279. Lys-286 is a catalytic residue. Residues Asp-297, Asp-356, and Glu-358 each contribute to the Mn(2+) site. Arg-360 is an active-site residue.

The protein belongs to the peptidase M17 family. Mn(2+) serves as cofactor.

The protein localises to the cytoplasm. It carries out the reaction Release of an N-terminal amino acid, Xaa-|-Yaa-, in which Xaa is preferably Leu, but may be other amino acids including Pro although not Arg or Lys, and Yaa may be Pro. Amino acid amides and methyl esters are also readily hydrolyzed, but rates on arylamides are exceedingly low.. The enzyme catalyses Release of an N-terminal amino acid, preferentially leucine, but not glutamic or aspartic acids.. Presumably involved in the processing and regular turnover of intracellular proteins. Catalyzes the removal of unsubstituted N-terminal amino acids from various peptides. The chain is Probable cytosol aminopeptidase from Burkholderia pseudomallei (strain 1710b).